The following is a 439-amino-acid chain: Phthalate 4,5-dioxygenase oxygenase subunit (439 aa).

A Rieske domain is found at 27 to 134 (WTPVCLLEEV…TREWGGFVWA (108 aa)). Cys-70, His-72, Cys-89, and His-92 together coordinate [2Fe-2S] cluster. 2 residues coordinate Fe cation: His-181 and His-186.

It belongs to the bacterial ring-hydroxylating dioxygenase alpha subunit family. As to quaternary structure, this dioxygenase system consists of two proteins: phthalate oxygenase and phthalate oxygenase reductase. [2Fe-2S] cluster is required as a cofactor. The cofactor is Fe cation.

The catalysed reaction is phthalate + NADH + O2 + H(+) = cis-4,5-dihydroxycyclohexa-2,6-diene-1,2-dicarboxylate + NAD(+). It functions in the pathway xenobiotic degradation; phthalate degradation; 3,4-dihydroxybenzoate from phthalate: step 1/3. The protein is Phthalate 4,5-dioxygenase oxygenase subunit (pht3) of Pseudomonas putida (Arthrobacter siderocapsulatus).